Consider the following 349-residue polypeptide: Mitochondrial carrier protein SCaMC-3L (349 aa).

4 consecutive transmembrane segments (helical) span residues 88 to 104 (GALW…GAVS), 149 to 168 (GNGI…FSVF), 188 to 205 (LLAG…INPM), and 243 to 261 (YLPN…LAVY). Solcar repeat units lie at residues 88 to 174 (GALW…CKNY) and 182 to 267 (PPFQ…LNCL).

This sequence belongs to the mitochondrial carrier (TC 2.A.29) family.

Its subcellular location is the mitochondrion inner membrane. The catalysed reaction is Mg(2+)(out) + phosphate(in) + ATP(out) = Mg(2+)(in) + phosphate(out) + ATP(in). It carries out the reaction ADP(out) + phosphate(in) + H(+)(out) = ADP(in) + phosphate(out) + H(+)(in). Functionally, calcium-independent ATP-Mg/Pi exchanger that catalyzes the electroneutral exchange of Mg-ATP or free ADP against an hydrogenphosphate and participates in the net transport of adenine nucleotides across the mitochondria inner membrane. The polypeptide is Mitochondrial carrier protein SCaMC-3L (Bos taurus (Bovine)).